Here is a 55-residue protein sequence, read N- to C-terminus: Large ribosomal subunit protein bL33A (55 aa).

The protein belongs to the bacterial ribosomal protein bL33 family.

The protein is Large ribosomal subunit protein bL33A of Rhodococcus jostii (strain RHA1).